The following is a 241-amino-acid chain: Fatty acid metabolism regulator protein (241 aa).

Positions 11–79 (QSPAALAEEY…HGKPTKVNNI (69 aa)) constitute an HTH gntR-type domain. The H-T-H motif DNA-binding region spans 39 to 58 (ERDLADKIGVTRTTLREVLQ).

In terms of assembly, homodimer.

The protein localises to the cytoplasm. In terms of biological role, multifunctional regulator of fatty acid metabolism. This is Fatty acid metabolism regulator protein from Haemophilus influenzae (strain 86-028NP).